The following is a 149-amino-acid chain: NADH-quinone oxidoreductase subunit A (149 aa).

The next 3 membrane-spanning stretches (helical) occupy residues 16-36 (FAVF…GAFF), 68-88 (FYLV…LYAW), and 98-118 (LGFI…FYLV).

The protein belongs to the complex I subunit 3 family. As to quaternary structure, NDH-1 is composed of 13 different subunits. Subunits NuoA, H, J, K, L, M, N constitute the membrane sector of the complex.

Its subcellular location is the cell inner membrane. It carries out the reaction a quinone + NADH + 5 H(+)(in) = a quinol + NAD(+) + 4 H(+)(out). NDH-1 shuttles electrons from NADH, via FMN and iron-sulfur (Fe-S) centers, to quinones in the respiratory chain. The immediate electron acceptor for the enzyme in this species is believed to be ubiquinone. Couples the redox reaction to proton translocation (for every two electrons transferred, four hydrogen ions are translocated across the cytoplasmic membrane), and thus conserves the redox energy in a proton gradient. The chain is NADH-quinone oxidoreductase subunit A from Photorhabdus laumondii subsp. laumondii (strain DSM 15139 / CIP 105565 / TT01) (Photorhabdus luminescens subsp. laumondii).